A 201-amino-acid polypeptide reads, in one-letter code: Probable cobalt-precorrin-6B C(15)-methyltransferase (decarboxylating) (201 aa).

S-adenosyl-L-methionine contacts are provided by residues T28, 52 to 56 (GTGTG), D76, and A105.

The protein belongs to the methyltransferase superfamily. Archaeal-type CbiT family.

The enzyme catalyses Co-precorrin-6B + S-adenosyl-L-methionine = Co-precorrin-7 + S-adenosyl-L-homocysteine + CO2. It functions in the pathway cofactor biosynthesis; adenosylcobalamin biosynthesis; cob(II)yrinate a,c-diamide from sirohydrochlorin (anaerobic route): step 8/10. Catalyzes the methylation of C-15 in cobalt-precorrin-6B followed by the decarboxylation of C-12 to form cobalt-precorrin-7. In Thermoplasma volcanium (strain ATCC 51530 / DSM 4299 / JCM 9571 / NBRC 15438 / GSS1), this protein is Probable cobalt-precorrin-6B C(15)-methyltransferase (decarboxylating).